The following is a 308-amino-acid chain: 4-hydroxy-3-methylbut-2-enyl diphosphate reductase (308 aa).

Cys12 provides a ligand contact to [4Fe-4S] cluster. Residues His41 and His74 each coordinate (2E)-4-hydroxy-3-methylbut-2-enyl diphosphate. Dimethylallyl diphosphate contacts are provided by His41 and His74. Isopentenyl diphosphate is bound by residues His41 and His74. Cys96 contacts [4Fe-4S] cluster. (2E)-4-hydroxy-3-methylbut-2-enyl diphosphate is bound at residue His124. His124 contacts dimethylallyl diphosphate. Position 124 (His124) interacts with isopentenyl diphosphate. The Proton donor role is filled by Glu126. Residue Thr166 coordinates (2E)-4-hydroxy-3-methylbut-2-enyl diphosphate. Residue Cys196 participates in [4Fe-4S] cluster binding. Residues Ser224, Ser225, Asn226, and Ser268 each contribute to the (2E)-4-hydroxy-3-methylbut-2-enyl diphosphate site. Dimethylallyl diphosphate is bound by residues Ser224, Ser225, Asn226, and Ser268. Isopentenyl diphosphate-binding residues include Ser224, Ser225, Asn226, and Ser268.

It belongs to the IspH family. Requires [4Fe-4S] cluster as cofactor.

The catalysed reaction is isopentenyl diphosphate + 2 oxidized [2Fe-2S]-[ferredoxin] + H2O = (2E)-4-hydroxy-3-methylbut-2-enyl diphosphate + 2 reduced [2Fe-2S]-[ferredoxin] + 2 H(+). The enzyme catalyses dimethylallyl diphosphate + 2 oxidized [2Fe-2S]-[ferredoxin] + H2O = (2E)-4-hydroxy-3-methylbut-2-enyl diphosphate + 2 reduced [2Fe-2S]-[ferredoxin] + 2 H(+). It participates in isoprenoid biosynthesis; dimethylallyl diphosphate biosynthesis; dimethylallyl diphosphate from (2E)-4-hydroxy-3-methylbutenyl diphosphate: step 1/1. Its pathway is isoprenoid biosynthesis; isopentenyl diphosphate biosynthesis via DXP pathway; isopentenyl diphosphate from 1-deoxy-D-xylulose 5-phosphate: step 6/6. In terms of biological role, catalyzes the conversion of 1-hydroxy-2-methyl-2-(E)-butenyl 4-diphosphate (HMBPP) into a mixture of isopentenyl diphosphate (IPP) and dimethylallyl diphosphate (DMAPP). Acts in the terminal step of the DOXP/MEP pathway for isoprenoid precursor biosynthesis. This chain is 4-hydroxy-3-methylbut-2-enyl diphosphate reductase, found in Vesicomyosocius okutanii subsp. Calyptogena okutanii (strain HA).